Consider the following 292-residue polypeptide: Transcription antiterminator LacT (292 aa).

2 PRD domains span residues 66–170 (NIPI…DDGE) and 172–284 (VFGK…APAQ).

It belongs to the transcriptional antiterminator BglG family.

Its function is as follows. Mediates positive regulation of the lac operon by functioning as an antiterminator factor of transcription. This chain is Transcription antiterminator LacT (lacT), found in Lacticaseibacillus casei (Lactobacillus casei).